A 491-amino-acid chain; its full sequence is Large ribosomal subunit protein mL101 (rPPR4) (491 aa).

PPR repeat units follow at residues 122–156, 157–191, 192–226, 228–262, 263–293, 298–328, 333–367, and 368–402; these read TELT…NITP, SSMS…NVMP, DSYT…GRVA, DWTT…NTQR, DFTA…LRLA, SNVA…WQAN, DIRI…GGKL, and NAKT…GKGD.

It belongs to the PPR family. P subfamily. Component of the mitochondrial ribosome large subunit.

The protein resides in the mitochondrion. This chain is Large ribosomal subunit protein mL101 (rPPR4), found in Arabidopsis thaliana (Mouse-ear cress).